A 237-amino-acid chain; its full sequence is Ditrans,polycis-undecaprenyl-diphosphate synthase ((2E,6E)-farnesyl-diphosphate specific) (237 aa).

The active site involves Asp-11. Asp-11 serves as a coordination point for Mg(2+). Residues 12 to 15 (GNGR), Trp-16, Arg-24, His-28, and 56 to 58 (SIE) each bind substrate. Asn-59 functions as the Proton acceptor in the catalytic mechanism. Residues Arg-62, Arg-179, and 185-187 (RLS) contribute to the substrate site. Glu-198 contributes to the Mg(2+) binding site.

Belongs to the UPP synthase family. As to quaternary structure, homodimer. The cofactor is Mg(2+).

It carries out the reaction 8 isopentenyl diphosphate + (2E,6E)-farnesyl diphosphate = di-trans,octa-cis-undecaprenyl diphosphate + 8 diphosphate. Catalyzes the sequential condensation of isopentenyl diphosphate (IPP) with (2E,6E)-farnesyl diphosphate (E,E-FPP) to yield (2Z,6Z,10Z,14Z,18Z,22Z,26Z,30Z,34E,38E)-undecaprenyl diphosphate (di-trans,octa-cis-UPP). UPP is the precursor of glycosyl carrier lipid in the biosynthesis of bacterial cell wall polysaccharide components such as peptidoglycan and lipopolysaccharide. This Coxiella burnetii (strain RSA 493 / Nine Mile phase I) protein is Ditrans,polycis-undecaprenyl-diphosphate synthase ((2E,6E)-farnesyl-diphosphate specific).